A 447-amino-acid chain; its full sequence is Tubulin beta-1 chain (447 aa).

Residue glutamine 11 participates in GTP binding. At serine 40 the chain carries Phosphoserine. Residues glutamate 69, serine 138, glycine 142, threonine 143, glycine 144, asparagine 204, and asparagine 226 each coordinate GTP. Glutamate 69 provides a ligand contact to Mg(2+). Serine 339 is subject to Phosphoserine. Residues 427-447 (EATADEDAEFEEEQEAEVDEN) are disordered. A compositionally biased stretch (acidic residues) spans 429–447 (TADEDAEFEEEQEAEVDEN).

This sequence belongs to the tubulin family. As to quaternary structure, dimer of alpha and beta chains. A typical microtubule is a hollow water-filled tube with an outer diameter of 25 nm and an inner diameter of 15 nM. Alpha-beta heterodimers associate head-to-tail to form protofilaments running lengthwise along the microtubule wall with the beta-tubulin subunit facing the microtubule plus end conferring a structural polarity. Microtubules usually have 13 protofilaments but different protofilament numbers can be found in some organisms and specialized cells. Interacts with mgr and Vhl. It depends on Mg(2+) as a cofactor.

It is found in the cytoplasm. It localises to the cytoskeleton. In terms of biological role, tubulin is the major constituent of microtubules, a cylinder consisting of laterally associated linear protofilaments composed of alpha- and beta-tubulin heterodimers. Microtubules grow by the addition of GTP-tubulin dimers to the microtubule end, where a stabilizing cap forms. Below the cap, tubulin dimers are in GDP-bound state, owing to GTPase activity of alpha-tubulin. This chain is Tubulin beta-1 chain (betaTub56D), found in Drosophila melanogaster (Fruit fly).